The sequence spans 139 residues: Immunogenic miracidial antigen 8I' (139 aa).

A disordered region spans residues isoleucine 61–histidine 139. Residues glycine 64 to aspartate 85 are compositionally biased toward acidic residues. Over residues serine 90–glutamine 103 the composition is skewed to polar residues.

The protein belongs to the immunogenic miracidial antigen family.

In Schistosoma japonicum (Blood fluke), this protein is Immunogenic miracidial antigen 8I' (8I').